The sequence spans 504 residues: Cytochrome P450 71B4 (504 aa).

Residues 1–21 form a helical membrane-spanning segment; sequence MVSLLSFFLLLLVPIFFLLIF. C446 lines the heme pocket.

It belongs to the cytochrome P450 family. Heme serves as cofactor.

The protein localises to the membrane. The protein is Cytochrome P450 71B4 (CYP71B4) of Arabidopsis thaliana (Mouse-ear cress).